The chain runs to 166 residues: Ribosome maturation factor RimM (166 aa).

The PRC barrel domain maps to 90–163 (EGQYFIKDII…KIVIKAVEEW (74 aa)).

Belongs to the RimM family. Binds ribosomal protein uS19.

It localises to the cytoplasm. Functionally, an accessory protein needed during the final step in the assembly of 30S ribosomal subunit, possibly for assembly of the head region. Essential for efficient processing of 16S rRNA. May be needed both before and after RbfA during the maturation of 16S rRNA. It has affinity for free ribosomal 30S subunits but not for 70S ribosomes. The polypeptide is Ribosome maturation factor RimM (Clostridium acetobutylicum (strain ATCC 824 / DSM 792 / JCM 1419 / IAM 19013 / LMG 5710 / NBRC 13948 / NRRL B-527 / VKM B-1787 / 2291 / W)).